The primary structure comprises 172 residues: Capsid protein (172 aa).

Belongs to the nanoviridae capsid protein family.

It localises to the virion. The sequence is that of Capsid protein (DNA-S) from Astragalus sinicus (Chinese milk vetch).